The primary structure comprises 167 residues: Lipoprotein signal peptidase (167 aa).

The next 4 membrane-spanning stretches (helical) occupy residues 8 to 28 (TFLT…VVLL), 46 to 66 (WGHF…FGLF), 68 to 88 (QYKI…ALFL), and 101 to 121 (VALT…LLYG). Catalysis depends on residues Asp-125 and Asp-143. A helical membrane pass occupies residues 139-159 (FNLADAFISIGTLLLIGHLYF).

This sequence belongs to the peptidase A8 family.

The protein localises to the cell inner membrane. The enzyme catalyses Release of signal peptides from bacterial membrane prolipoproteins. Hydrolyzes -Xaa-Yaa-Zaa-|-(S,diacylglyceryl)Cys-, in which Xaa is hydrophobic (preferably Leu), and Yaa (Ala or Ser) and Zaa (Gly or Ala) have small, neutral side chains.. Its pathway is protein modification; lipoprotein biosynthesis (signal peptide cleavage). This protein specifically catalyzes the removal of signal peptides from prolipoproteins. This Chlamydia trachomatis serovar A (strain ATCC VR-571B / DSM 19440 / HAR-13) protein is Lipoprotein signal peptidase.